The following is a 140-amino-acid chain: Transmembrane protein 107 (140 aa).

2 helical membrane-spanning segments follow: residues 7 to 27 and 53 to 73; these read LVPSRFLTLTAHLVIVITIFW and LIIALSVTLGLFAVEYAGFLS. The N-linked (GlcNAc...) asparagine glycan is linked to asparagine 79. The next 2 helical transmembrane spans lie at 84–104 and 113–133; these read LLSVGAHASATVSLLFFLFEG and IMSFCSALPAVTEIIIFIAVF.

It localises to the membrane. In terms of biological role, may play a role in cilia formation and embryonic patterning. This chain is Transmembrane protein 107 (tmem107), found in Xenopus laevis (African clawed frog).